We begin with the raw amino-acid sequence, 273 residues long: Cytosolic sulfotransferase 4 (273 aa).

74-79 (KCGTTW) contributes to the 3'-phosphoadenylyl sulfate binding site. His121 serves as the catalytic Proton acceptor. 3'-phosphoadenylyl sulfate contacts are provided by residues Arg143 and 239–241 (RKG).

The protein belongs to the sulfotransferase 1 family.

It is found in the cytoplasm. In terms of biological role, sulfotransferase that utilizes 3'-phospho-5'-adenylyl sulfate (PAPS) as sulfonate donor. In Arabidopsis thaliana (Mouse-ear cress), this protein is Cytosolic sulfotransferase 4 (SOT4).